The following is a 218-amino-acid chain: Protein P9 (218 aa).

It is found in the virion membrane. The chain is Protein P9 (IX) from Pseudoalteromonas espejiana (Bacteriophage PM2).